A 192-amino-acid polypeptide reads, in one-letter code: Fe/S biogenesis protein NfuA (192 aa).

The [4Fe-4S] cluster site is built by cysteine 149 and cysteine 152.

This sequence belongs to the NfuA family. In terms of assembly, homodimer. The cofactor is [4Fe-4S] cluster.

Involved in iron-sulfur cluster biogenesis. Binds a 4Fe-4S cluster, can transfer this cluster to apoproteins, and thereby intervenes in the maturation of Fe/S proteins. Could also act as a scaffold/chaperone for damaged Fe/S proteins. This is Fe/S biogenesis protein NfuA from Shewanella denitrificans (strain OS217 / ATCC BAA-1090 / DSM 15013).